A 287-amino-acid polypeptide reads, in one-letter code: Succinate dehydrogenase [ubiquinone] iron-sulfur subunit, mitochondrial (287 aa).

The N-terminal 23 residues, 1–23, are a transit peptide targeting the mitochondrion; it reads MISNVLKRASVLARSNGIQSAFY. A 2Fe-2S ferredoxin-type domain is found at 51–140; that stretch reads FQVYRYNEET…GDTVKVYPLP (90 aa). Residues cysteine 101, cysteine 106, cysteine 109, and cysteine 121 each contribute to the [2Fe-2S] cluster site. Residues 186–216 form the 4Fe-4S ferredoxin-type domain; sequence NRHKLDGLYECILCACCSTSCPSYWWSEGGD. [4Fe-4S] cluster contacts are provided by cysteine 196, cysteine 199, and cysteine 202. Cysteine 206 contributes to the [3Fe-4S] cluster binding site. Residue tryptophan 211 coordinates a ubiquinone. Positions 257 and 263 each coordinate [3Fe-4S] cluster. Residue cysteine 267 participates in [4Fe-4S] cluster binding.

Belongs to the succinate dehydrogenase/fumarate reductase iron-sulfur protein family. Component of complex II composed of four subunits: the flavoprotein (FP) SDHA, iron-sulfur protein (IP) SDHB, and a cytochrome b composed of a large and a small subunit. The cofactor is [2Fe-2S] cluster. Requires [3Fe-4S] cluster as cofactor. [4Fe-4S] cluster serves as cofactor.

The protein resides in the mitochondrion inner membrane. The catalysed reaction is a quinone + succinate = fumarate + a quinol. The protein operates within carbohydrate metabolism; tricarboxylic acid cycle; fumarate from succinate (eukaryal route): step 1/1. Functionally, iron-sulfur protein (IP) subunit of succinate dehydrogenase (SDH) that is involved in complex II of the mitochondrial electron transport chain and is responsible for transferring electrons from succinate to ubiquinone (coenzyme Q). The sequence is that of Succinate dehydrogenase [ubiquinone] iron-sulfur subunit, mitochondrial (sdhB) from Dictyostelium discoideum (Social amoeba).